Reading from the N-terminus, the 92-residue chain is Large ribosomal subunit protein bL27 (92 aa).

A disordered region spans residues M1–F26.

The protein belongs to the bacterial ribosomal protein bL27 family.

This is Large ribosomal subunit protein bL27 from Corynebacterium aurimucosum (strain ATCC 700975 / DSM 44827 / CIP 107346 / CN-1) (Corynebacterium nigricans).